Reading from the N-terminus, the 172-residue chain is Ribosome maturation factor RimM (172 aa).

In terms of domain architecture, PRC barrel spans 94–167 (ENEFYLFQLK…FIKVELLPGM (74 aa)).

The protein belongs to the RimM family. In terms of assembly, binds ribosomal protein uS19.

The protein resides in the cytoplasm. In terms of biological role, an accessory protein needed during the final step in the assembly of 30S ribosomal subunit, possibly for assembly of the head region. Essential for efficient processing of 16S rRNA. May be needed both before and after RbfA during the maturation of 16S rRNA. It has affinity for free ribosomal 30S subunits but not for 70S ribosomes. The chain is Ribosome maturation factor RimM from Carboxydothermus hydrogenoformans (strain ATCC BAA-161 / DSM 6008 / Z-2901).